The primary structure comprises 338 residues: uncharacterized protein (338 aa).

One can recognise a TNase-like domain in the interval 144–321; sequence HTLPVDVKAV…RAARVGLWAS (178 aa). Active-site residues include Arg-228, Glu-236, and Arg-270.

This is an uncharacterized protein from Capnoides sempervirens (Rock-harlequin).